Reading from the N-terminus, the 662-residue chain is 3',5'-cyclic-AMP phosphodiesterase, isoform F (662 aa).

2 disordered regions span residues 79–108 and 207–245; these read VPAS…LSQG and SAGQ…RLPT. The segment covering 80–98 has biased composition (polar residues); the sequence is PASNKSRRPNQSSSASRSG. The 330-residue stretch at 248–577 folds into the PDEase domain; that stretch reads VETPRENELG…DYYQSMIPPS (330 aa). The Proton donor role is filled by H324. Residue 324-328 coordinates 3',5'-cyclic AMP; that stretch reads HNSLH. H328, H364, D365, and D482 together coordinate a divalent metal cation. 3',5'-cyclic AMP contacts are provided by D365, D482, and Q533. Residues 599-616 are compositionally biased toward acidic residues; the sequence is EESDQENLAELEEGDESG. Residues 599–662 are disordered; that stretch reads EESDQENLAE…CQNQPQHGGM (64 aa). Residues 617–634 show a composition bias toward low complexity; it reads GESTTTGTTGTTAASALS. Gly residues predominate over residues 635–646; the sequence is GAGGGGGGGGGM. Residues 652-662 are compositionally biased toward polar residues; that stretch reads GCQNQPQHGGM.

It belongs to the cyclic nucleotide phosphodiesterase family. PDE4 subfamily. As to quaternary structure, monomer. A divalent metal cation serves as cofactor.

The catalysed reaction is 3',5'-cyclic AMP + H2O = AMP + H(+). Its pathway is purine metabolism; 3',5'-cyclic AMP degradation; AMP from 3',5'-cyclic AMP: step 1/1. Hydrolyzes the second messenger cAMP, which is a key regulator of many important physiological processes. Vital for female fertility. Required for learning/memory. In Drosophila melanogaster (Fruit fly), this protein is 3',5'-cyclic-AMP phosphodiesterase, isoform F.